Reading from the N-terminus, the 655-residue chain is ATP-dependent zinc metalloprotease FtsH (655 aa).

At 1–17 (MPIETEPNRTRKNFEPK) the chain is on the cytoplasmic side. The chain crosses the membrane as a helical span at residues 18-38 (RFGGSLFILFTLLLFLNLFVL). Residues 39–124 (RGPRFPITAY…APPPSSLSWL (86 aa)) lie on the Lumenal side of the membrane. Residues 125–145 (PTLLGWVVPPLIFFGIWSWLI) form a helical membrane-spanning segment. Residues 146-655 (NRNQGAGPAA…LNSHQLIGIN (510 aa)) lie on the Cytoplasmic side of the membrane. ATP is bound at residue 216 to 223 (GPPGTGKT). His-440 serves as a coordination point for Zn(2+). Residue Glu-441 is part of the active site. Residues His-444 and Asp-517 each coordinate Zn(2+).

In the central section; belongs to the AAA ATPase family. The protein in the C-terminal section; belongs to the peptidase M41 family. As to quaternary structure, homohexamer. The cofactor is Zn(2+).

The protein localises to the cellular thylakoid membrane. In terms of biological role, acts as a processive, ATP-dependent zinc metallopeptidase for both cytoplasmic and membrane proteins. Plays a role in the quality control of integral membrane proteins. This is ATP-dependent zinc metalloprotease FtsH from Acaryochloris marina (strain MBIC 11017).